A 295-amino-acid chain; its full sequence is GTPase Era (295 aa).

Residues 5 to 172 (YCGYAAIIGR…EQAVHQLMPE (168 aa)) form the Era-type G domain. The tract at residues 13–20 (GRPNVGKS) is G1. Position 13-20 (13-20 (GRPNVGKS)) interacts with GTP. Residues 39–43 (QTTRY) form a G2 region. Residues 60–63 (DTPG) are G3. GTP contacts are provided by residues 60 to 64 (DTPGL) and 121 to 124 (NKVD). A G4 region spans residues 121-124 (NKVD). The tract at residues 151–153 (LSA) is G5. Residues 203-279 (LGQEIPYSLA…FLQLWVKVKS (77 aa)) enclose the KH type-2 domain.

Belongs to the TRAFAC class TrmE-Era-EngA-EngB-Septin-like GTPase superfamily. Era GTPase family. In terms of assembly, monomer.

The protein resides in the cytoplasm. It is found in the cell inner membrane. Its function is as follows. An essential GTPase that binds both GDP and GTP, with rapid nucleotide exchange. Plays a role in 16S rRNA processing and 30S ribosomal subunit biogenesis and possibly also in cell cycle regulation and energy metabolism. In Coxiella burnetii (strain CbuG_Q212) (Coxiella burnetii (strain Q212)), this protein is GTPase Era.